We begin with the raw amino-acid sequence, 339 residues long: Dihydroorotase (339 aa).

Positions 12 and 14 each coordinate Zn(2+). Substrate contacts are provided by residues 14-16 and asparagine 40; that span reads HVR. 4 residues coordinate Zn(2+): lysine 94, histidine 133, histidine 167, and aspartate 239. An N6-carboxylysine modification is found at lysine 94. Histidine 133 lines the substrate pocket. Residue aspartate 239 is part of the active site. The substrate site is built by histidine 243 and alanine 255.

It belongs to the metallo-dependent hydrolases superfamily. DHOase family. Class II DHOase subfamily. As to quaternary structure, homodimer. Zn(2+) serves as cofactor.

The enzyme catalyses (S)-dihydroorotate + H2O = N-carbamoyl-L-aspartate + H(+). It functions in the pathway pyrimidine metabolism; UMP biosynthesis via de novo pathway; (S)-dihydroorotate from bicarbonate: step 3/3. Functionally, catalyzes the reversible cyclization of carbamoyl aspartate to dihydroorotate. The polypeptide is Dihydroorotase (Helicobacter pylori (strain HPAG1)).